The sequence spans 1100 residues: Lysylphosphatidylglycerol biosynthesis bifunctional protein LysX (1100 aa).

The interval 1-601 (MTPTSLARAR…LLHSDGTAPD (601 aa)) is phosphatidylglycerol lysyltransferase. Helical transmembrane passes span 18 to 38 (VPAAAGWIVGVIATLSLLASV), 60 to 80 (FPDTSFAWAFVLALLAAALAA), 84 to 104 (IAWWILVGYMIAAAGWNIAGL), 112 to 132 (FAEVGEVIGLAFHLAAIAFLL), 154 to 174 (LVASMAVGTLIGWGLLELFPG), 206 to 226 (VFVNALLGLFGAVALMVTAIV), and 314 to 332 (AYGWAPGVMGASAAGAQAF). The segment at 602–1100 (GMGLQADLAD…TLPFPLAKPR (499 aa)) is lysine--tRNA ligase. The OB DNA-binding region spans 661 to 739 (VAVAGRVLRS…SLLVSGWRLI (79 aa)). Mg(2+) contacts are provided by Asp1012 and Glu1019.

This sequence in the N-terminal section; belongs to the LPG synthetase family. The protein in the C-terminal section; belongs to the class-II aminoacyl-tRNA synthetase family. The cofactor is Mg(2+).

The protein localises to the cell membrane. The catalysed reaction is tRNA(Lys) + L-lysine + ATP = L-lysyl-tRNA(Lys) + AMP + diphosphate. It carries out the reaction L-lysyl-tRNA(Lys) + a 1,2-diacyl-sn-glycero-3-phospho-(1'-sn-glycerol) = a 1,2-diacyl-sn-glycero-3-phospho-1'-(3'-O-L-lysyl)-sn-glycerol + tRNA(Lys). Functionally, catalyzes the production of L-lysyl-tRNA(Lys)transfer and the transfer of a lysyl group from L-lysyl-tRNA(Lys) to membrane-bound phosphatidylglycerol (PG), which produces lysylphosphatidylglycerol (LPG), one of the components of the bacterial membrane with a positive net charge. LPG synthesis contributes to the resistance to cationic antimicrobial peptides (CAMPs) and likely protects M.tuberculosis against the CAMPs produced by competiting microorganisms (bacteriocins). In fact, the modification of anionic phosphatidylglycerol with positively charged L-lysine results in repulsion of the peptides. This chain is Lysylphosphatidylglycerol biosynthesis bifunctional protein LysX (lysX), found in Mycolicibacterium vanbaalenii (strain DSM 7251 / JCM 13017 / BCRC 16820 / KCTC 9966 / NRRL B-24157 / PYR-1) (Mycobacterium vanbaalenii).